A 240-amino-acid polypeptide reads, in one-letter code: Cell division control protein 14 (240 aa).

Interacts with sid1.

It localises to the cytoplasm. The protein localises to the cytoskeleton. Its subcellular location is the microtubule organizing center. It is found in the spindle pole body. Its function is as follows. Has a role in the septation initiation network (SIN) required for cytokinesis. The sequence is that of Cell division control protein 14 (cdc14) from Schizosaccharomyces pombe (strain 972 / ATCC 24843) (Fission yeast).